The primary structure comprises 266 residues: 2-C-methyl-D-erythritol 4-phosphate cytidylyltransferase (266 aa).

The segment covering 234 to 251 has biased composition (basic and acidic residues); that stretch reads ADDARSAEARSAEARSEE. Residues 234–266 form a disordered region; it reads ADDARSAEARSAEARSEEPQFAGARSTDARSGG.

This sequence belongs to the IspD/TarI cytidylyltransferase family. IspD subfamily.

The catalysed reaction is 2-C-methyl-D-erythritol 4-phosphate + CTP + H(+) = 4-CDP-2-C-methyl-D-erythritol + diphosphate. It functions in the pathway isoprenoid biosynthesis; isopentenyl diphosphate biosynthesis via DXP pathway; isopentenyl diphosphate from 1-deoxy-D-xylulose 5-phosphate: step 2/6. Its function is as follows. Catalyzes the formation of 4-diphosphocytidyl-2-C-methyl-D-erythritol from CTP and 2-C-methyl-D-erythritol 4-phosphate (MEP). The chain is 2-C-methyl-D-erythritol 4-phosphate cytidylyltransferase from Frankia casuarinae (strain DSM 45818 / CECT 9043 / HFP020203 / CcI3).